The sequence spans 178 residues: MTHKSVRDYIRTIVDFPHEGILFRDVTTLFADPRGFRIAIDQLLAPYAGMRFDKVAGLEARGFILGGAVAHRLSTGFVPIRKKGKLPGRTISVSYQLEYGEAVVEVHDDAIQAGEKVLLVDDLLATGGTAEAGIKLIEQLGGQVVGCAFVVDLPDLGGRKRLEAMGMEVHALCAFEGL.

This sequence belongs to the purine/pyrimidine phosphoribosyltransferase family. In terms of assembly, homodimer.

Its subcellular location is the cytoplasm. It catalyses the reaction AMP + diphosphate = 5-phospho-alpha-D-ribose 1-diphosphate + adenine. The protein operates within purine metabolism; AMP biosynthesis via salvage pathway; AMP from adenine: step 1/1. In terms of biological role, catalyzes a salvage reaction resulting in the formation of AMP, that is energically less costly than de novo synthesis. In Cereibacter sphaeroides (strain ATCC 17023 / DSM 158 / JCM 6121 / CCUG 31486 / LMG 2827 / NBRC 12203 / NCIMB 8253 / ATH 2.4.1.) (Rhodobacter sphaeroides), this protein is Adenine phosphoribosyltransferase.